Consider the following 414-residue polypeptide: Probable 26S proteasome regulatory subunit 6B (414 aa).

Residue 202–209 (GPPGCGKT) participates in ATP binding.

This sequence belongs to the AAA ATPase family.

It localises to the cytoplasm. Its subcellular location is the nucleus. In terms of biological role, the 26S proteasome is involved in the ATP-dependent degradation of ubiquitinated proteins. The regulatory (or ATPase) complex confers ATP dependency and substrate specificity to the 26S complex. This chain is Probable 26S proteasome regulatory subunit 6B (rpt-3), found in Caenorhabditis elegans.